The sequence spans 145 residues: Large ribosomal subunit protein bL35c (145 aa).

A chloroplast-targeting transit peptide spans 1-56 (MASLSMASVNVSFCHPLRSSSPKVSLRSSVHFATSLSSSHSISGLRAVLPLKISTV).

The protein belongs to the bacterial ribosomal protein bL35 family. As to quaternary structure, part of the 50S ribosomal subunit.

The protein resides in the plastid. Its subcellular location is the chloroplast. The chain is Large ribosomal subunit protein bL35c from Arabidopsis thaliana (Mouse-ear cress).